The chain runs to 487 residues: Phenylalanine--tRNA ligase alpha subunit (487 aa).

Residues Thr-319, 361-363 (QVE), and Tyr-401 each bind L-phenylalanine. Glu-403 contributes to the Mg(2+) binding site. Phe-427 lines the L-phenylalanine pocket.

The protein belongs to the class-II aminoacyl-tRNA synthetase family. Phe-tRNA synthetase alpha subunit type 2 subfamily. Tetramer of two alpha and two beta subunits. The cofactor is Mg(2+).

It localises to the cytoplasm. It carries out the reaction tRNA(Phe) + L-phenylalanine + ATP = L-phenylalanyl-tRNA(Phe) + AMP + diphosphate + H(+). The sequence is that of Phenylalanine--tRNA ligase alpha subunit (phesA) from Dictyostelium discoideum (Social amoeba).